A 508-amino-acid polypeptide reads, in one-letter code: Endoglucanase 6 (508 aa).

The N-terminal stretch at 1–33 is a signal peptide; sequence MLAASLRVEAVAVVAAAVLVLLLSPAAVVVVAG. Aspartate 89 functions as the Nucleophile in the catalytic mechanism. Active-site residues include histidine 419, aspartate 471, and glutamate 480.

The protein belongs to the glycosyl hydrolase 9 (cellulase E) family.

It is found in the secreted. It carries out the reaction Endohydrolysis of (1-&gt;4)-beta-D-glucosidic linkages in cellulose, lichenin and cereal beta-D-glucans.. In Oryza sativa subsp. japonica (Rice), this protein is Endoglucanase 6.